The chain runs to 127 residues: Chorismate mutase AroH (127 aa).

The 119-residue stretch at 3–121 (IRGIRGATTV…VVVLRPDLSL (119 aa)) folds into the Chorismate mutase aroH-type domain. Prephenate-binding positions include R7, 74 to 78 (TCMQE), R90, and Y108.

Homotrimer.

The protein resides in the cytoplasm. The catalysed reaction is chorismate = prephenate. Its pathway is metabolic intermediate biosynthesis; prephenate biosynthesis; prephenate from chorismate: step 1/1. Its function is as follows. Catalyzes the Claisen rearrangement of chorismate to prephenate. Probably involved in the aromatic amino acid biosynthesis. This chain is Chorismate mutase AroH, found in Bacillus subtilis (strain 168).